A 165-amino-acid polypeptide reads, in one-letter code: Cyclic pyranopterin monophosphate synthase (165 aa).

Residues 76–78 (LCH) and 114–115 (ME) each bind substrate. The active site involves D129.

The protein belongs to the MoaC family. As to quaternary structure, homohexamer; trimer of dimers.

The catalysed reaction is (8S)-3',8-cyclo-7,8-dihydroguanosine 5'-triphosphate = cyclic pyranopterin phosphate + diphosphate. It functions in the pathway cofactor biosynthesis; molybdopterin biosynthesis. Functionally, catalyzes the conversion of (8S)-3',8-cyclo-7,8-dihydroguanosine 5'-triphosphate to cyclic pyranopterin monophosphate (cPMP). This chain is Cyclic pyranopterin monophosphate synthase, found in Brucella canis (strain ATCC 23365 / NCTC 10854 / RM-666).